A 327-amino-acid chain; its full sequence is Movement protein (327 aa).

Residues 297–327 (SASSSNTENELARVSQNIDLLKNKLKEICGE) adopt a coiled-coil conformation.

Belongs to the caulimoviridae movement protein family. As to quaternary structure, homotrimer, through the coiled-coil domain. Interacts with VAP. May interact (via N-terminus) with host prenylated Rab acceptor protein 1D (PRA1D).

The protein resides in the host cell junction. It is found in the host plasmodesma. In terms of biological role, transports viral genome to neighboring plant cells directly through plasmosdesmata, without any budding. The movement protein allows efficient cell to cell propagation, by bypassing the host cell wall barrier. Acts by forming tubules structures that increase the size exclusion limit (SEL) of plasmodesmata, thereby allowing viral ribonucleocapsids to spread directly to neighboring cells. This is Movement protein from Cauliflower mosaic virus (strain W260) (CaMV).